A 1375-amino-acid chain; its full sequence is DNA-directed RNA polymerase subunit beta' (1375 aa).

Residues C70, C72, C85, and C88 each coordinate Zn(2+). The Mg(2+) site is built by D460, D462, and D464. Residues C800, C874, C881, and C884 each contribute to the Zn(2+) site.

The protein belongs to the RNA polymerase beta' chain family. In terms of assembly, the RNAP catalytic core consists of 2 alpha, 1 beta, 1 beta' and 1 omega subunit. When a sigma factor is associated with the core the holoenzyme is formed, which can initiate transcription. The cofactor is Mg(2+). Zn(2+) serves as cofactor.

The catalysed reaction is RNA(n) + a ribonucleoside 5'-triphosphate = RNA(n+1) + diphosphate. DNA-dependent RNA polymerase catalyzes the transcription of DNA into RNA using the four ribonucleoside triphosphates as substrates. The protein is DNA-directed RNA polymerase subunit beta' of Bdellovibrio bacteriovorus (strain ATCC 15356 / DSM 50701 / NCIMB 9529 / HD100).